A 170-amino-acid polypeptide reads, in one-letter code: UPF0161 protein At3g09310 (170 aa).

2 disordered regions span residues 49–70 and 147–170; these read CLSA…GEEL and SGIK…QRKI. The span at 154 to 170 shows a compositional bias: acidic residues; the sequence is GDEEEEDNYDDEDQRKI.

Belongs to the UPF0161 family.

This Arabidopsis thaliana (Mouse-ear cress) protein is UPF0161 protein At3g09310.